A 213-amino-acid polypeptide reads, in one-letter code: ATP synthase subunit delta 2 (213 aa).

It belongs to the ATPase delta chain family. As to quaternary structure, F-type ATPases have 2 components, F(1) - the catalytic core - and F(0) - the membrane proton channel. F(1) has five subunits: alpha(3), beta(3), gamma(1), delta(1), epsilon(1). F(0) has three main subunits: a(1), b(2) and c(10-14). The alpha and beta chains form an alternating ring which encloses part of the gamma chain. F(1) is attached to F(0) by a central stalk formed by the gamma and epsilon chains, while a peripheral stalk is formed by the delta and b chains.

The protein resides in the cell inner membrane. Its function is as follows. F(1)F(0) ATP synthase produces ATP from ADP in the presence of a proton or sodium gradient. F-type ATPases consist of two structural domains, F(1) containing the extramembraneous catalytic core and F(0) containing the membrane proton channel, linked together by a central stalk and a peripheral stalk. During catalysis, ATP synthesis in the catalytic domain of F(1) is coupled via a rotary mechanism of the central stalk subunits to proton translocation. This protein is part of the stalk that links CF(0) to CF(1). It either transmits conformational changes from CF(0) to CF(1) or is implicated in proton conduction. The sequence is that of ATP synthase subunit delta 2 from Brachyspira hyodysenteriae (strain ATCC 49526 / WA1).